A 242-amino-acid polypeptide reads, in one-letter code: Triosephosphate isomerase (242 aa).

A substrate-binding site is contributed by 8–10 (NWK). The active-site Electrophile is the His91. Glu155 functions as the Proton acceptor in the catalytic mechanism. Substrate-binding residues include Gly161 and Ser192.

The protein belongs to the triosephosphate isomerase family. In terms of assembly, homodimer.

It is found in the cytoplasm. The enzyme catalyses D-glyceraldehyde 3-phosphate = dihydroxyacetone phosphate. Its pathway is carbohydrate biosynthesis; gluconeogenesis. It functions in the pathway carbohydrate degradation; glycolysis; D-glyceraldehyde 3-phosphate from glycerone phosphate: step 1/1. Functionally, involved in the gluconeogenesis. Catalyzes stereospecifically the conversion of dihydroxyacetone phosphate (DHAP) to D-glyceraldehyde-3-phosphate (G3P). In Wolbachia pipientis wMel, this protein is Triosephosphate isomerase.